We begin with the raw amino-acid sequence, 521 residues long: Peroxisomal membrane protein PEX23 (521 aa).

The interval 1–26 (MPTDPNSNPVSKAGLTPSSINSNISE) is disordered. Asparagine 23 and asparagine 53 each carry an N-linked (GlcNAc...) asparagine glycan. Helical transmembrane passes span 111-128 (SYISVLLVTTATLFILYF) and 133-150 (IYLGHLSIVGLIFLYSIF). N-linked (GlcNAc...) asparagine glycosylation occurs at asparagine 189. A helical membrane pass occupies residues 198–217 (LLFTSIFLSPGYILVCYLLF). A glycan (N-linked (GlcNAc...) asparagine) is linked at asparagine 279. Residues 425-446 (VSPGDDSSTDSASLPHSASETV) are disordered. Polar residues predominate over residues 429–446 (DDSSTDSASLPHSASETV). Asparagine 463 and asparagine 467 each carry an N-linked (GlcNAc...) asparagine glycan. Residues 465-486 (SGNITTSAETAPDSAGTAKKRK) are disordered.

It belongs to the PEX28-32 family. PEX32 subfamily.

The protein localises to the endoplasmic reticulum membrane. With PEX29, contributes to the formation of endoplasmic reticulum-mitochondria junctions which are important for mitochondrial function. Involved in lipid dropplets formation. This is Peroxisomal membrane protein PEX23 from Ogataea parapolymorpha (strain ATCC 26012 / BCRC 20466 / JCM 22074 / NRRL Y-7560 / DL-1) (Yeast).